The primary structure comprises 458 residues: Retinoic acid receptor alpha (458 aa).

The interval 1 to 87 (MSSKDNTCPP…PPPLPRIYKP (87 aa)) is modulating. The segment at 39–78 (GGLPGVQHQPPLSGYSTPSPATIETQSTSSEEIVPSPPTP) is disordered. Polar residues predominate over residues 52-69 (GYSTPSPATIETQSTSSE). 2 NR C4-type zinc fingers span residues 88 to 108 (CFVCQDKSSGYHYGVSACEGC) and 124 to 148 (CHRDKNCIINKVTRNRCQYCRLQKC). Residues 88-153 (CFVCQDKSSG…RLQKCFEVGM (66 aa)) constitute a DNA-binding region (nuclear receptor). Positions 154-182 (SKESVRNDRNKKKKESPKPEAIESYILSP) are hinge. Residues 183–417 (ETQDLIEKVQ…LIQEMLENSE (235 aa)) form the NR LBD domain. Positions 407–415 (PLIQEMLEN) match the 9aaTAD motif. Residues 419-458 (LDTLGGGASSDAPVTPVAPGSCSPSLSPSSTHSSPSTHSP) form a disordered region. Positions 439–458 (SCSPSLSPSSTHSSPSTHSP) are enriched in low complexity.

This sequence belongs to the nuclear hormone receptor family. NR1 subfamily. As to quaternary structure, heterodimer; with an rxr molecule. Binds DNA preferentially as a rar/rxr heterodimer.

It localises to the nucleus. Its function is as follows. Receptor for retinoic acid. Retinoic acid receptors bind as heterodimers to their target response elements in response to their ligands, all-trans or 9-cis retinoic acid, and regulate gene expression in various biological processes. The rar/rxr heterodimers bind to the retinoic acid response elements (RARE) composed of tandem 5'-AGGTCA-3' sites known as DR1-DR5. Required for primary neurogenesis and for anteroposterior neural patterning. This chain is Retinoic acid receptor alpha (rara), found in Xenopus laevis (African clawed frog).